Here is a 256-residue protein sequence, read N- to C-terminus: MAKNQNRIRNRWELITCGLGGHVTYAPDDAALAARLRASTGLGEVWRCLRCGDFALGGPQGRGAPEDAPLIMRGKALRQAIIIRALGVERLVRALVLALAAWAVWEFRGARGAIQATLDRDLPVLRAAGFKVDQMTVIHALEKALAAKPSTLALITGMLAAYAVLQAVEGVGLWLLKRWGEYFAVVATSIFLPLEVHDLAKGITTTRVVTFSINVAAVVYLLISKRLFGVRGGRKAYDVERRGEQLLDLERAAMLT.

2 consecutive transmembrane segments (helical) span residues 155–175 and 203–223; these read ITGMLAAYAVLQAVEGVGLWL and ITTTRVVTFSINVAAVVYLLI.

The protein localises to the cell membrane. This is an uncharacterized protein from Mycobacterium bovis (strain ATCC BAA-935 / AF2122/97).